We begin with the raw amino-acid sequence, 358 residues long: MEGSSSTIARKTWELENSILTVDSPDSTSDNIFYYDDTSQTRFQQEKPWENDPHYFKRVKISALALLKMVVHARSGGTIEIMGLMQGKTDGDTIIVMDAFALPVEGTETRVNAQDDAYEYMVEYSQTNKLAGRLENVVGWYHSHPGYGCWLSGIDVSTQRLNQQHQEPFLAVVIDPTRTVSAGKVEIGAFRTYSKGYKPPDEPVSEYQTIPLNKIEDFGVHCKQYYSLDVTYFKSSLDSHLLDLLWNKYWVNTLSSSPLLGNGDYVAGQISDLAEKLEQAESHLVQSRFGGVVPSSLHKKKEDESQLTKITRDSAKITVEQVHGLMSQVIKDELFNSMRQSNNKSPTDSSDPDPMITY.

M1 is subject to N-acetylmethionine. Residues 59 to 196 (VKISALALLK…IGAFRTYSKG (138 aa)) form the MPN domain. 3 residues coordinate Zn(2+): H142, H144, and D155. A JAMM motif motif is present at residues 142–155 (HSHPGYGCWLSGID). The segment covering 338-349 (MRQSNNKSPTDS) has biased composition (polar residues). The tract at residues 338-358 (MRQSNNKSPTDSSDPDPMITY) is disordered.

The protein belongs to the peptidase M67A family. CSN5 subfamily. As to quaternary structure, component of the CSN complex, probably composed of CSN1, CSN2, CSN3, CSN4, CSN5 (CSN5A or CSN5B), CSN6 (CSN6A or CSN6B), CSN7 and CSN8. CSN5A or CSN5B are present within distinct CSN complexes each containing only one copy of CSN5. Interacts with itself. In the complex, it is located in the center and probably interacts directly with CSN4 and CSN6A or CSN6B. Also exists as monomeric form. Interacts with CYT1 in vitro and in planta. Interacts with FLZ3. Requires a divalent metal cation as cofactor. As to expression, ubiquitously expressed. Highly expressed in flowers and roots. Expressed at lower level in seedlings and siliques.

Its subcellular location is the cytoplasm. The protein localises to the nucleus. Its function is as follows. Probable protease subunit of the COP9 signalosome complex (CSN), a complex involved in various cellular and developmental processes such as photomorphogenesis and auxin and jasmonate responses. The CSN complex is an essential regulator of the ubiquitin (Ubl) conjugation pathway by mediating the deneddylation of the cullin subunits of the SCF-type E3 ligase complexes, leading to decrease the Ubl ligase activity of SCF. In the complex, it probably acts as the catalytic center that mediates the cleavage of Nedd8 from cullins. It however has no metalloprotease activity by itself and requires the other subunits of the CSN complex. The CSN complex is involved in repression of photomorphogenesis in darkness by regulating the activity of COP1-containing Ubl ligase complexes. The complex is also required for degradation of PSIAA6 by regulating the activity of the Ubl ligase SCF-TIR complex. Not involved in CSN's deneddylation/derubylation activity. Essential for the structural integrity of the CSN holocomplex. The sequence is that of COP9 signalosome complex subunit 5b from Arabidopsis thaliana (Mouse-ear cress).